Here is a 368-residue protein sequence, read N- to C-terminus: D-alanine--D-alanine ligase (368 aa).

The region spanning 145–348 (KRLLQGAGLH…YQDLITTLIE (204 aa)) is the ATP-grasp domain. 175–230 (ADQLGLPLFIKPANQGSSVGVNKATTEAEFTAAIEEAFSYDHKVLIEAAIKGREIE) contacts ATP. Mg(2+) is bound by residues Asp-302, Glu-315, and Asn-317.

It belongs to the D-alanine--D-alanine ligase family. Mg(2+) serves as cofactor. Mn(2+) is required as a cofactor.

The protein localises to the cytoplasm. The catalysed reaction is 2 D-alanine + ATP = D-alanyl-D-alanine + ADP + phosphate + H(+). The protein operates within cell wall biogenesis; peptidoglycan biosynthesis. Cell wall formation. This chain is D-alanine--D-alanine ligase, found in Shouchella clausii (strain KSM-K16) (Alkalihalobacillus clausii).